The following is an 83-amino-acid chain: Small ribosomal subunit protein uS17 (83 aa).

The protein belongs to the universal ribosomal protein uS17 family. Part of the 30S ribosomal subunit.

One of the primary rRNA binding proteins, it binds specifically to the 5'-end of 16S ribosomal RNA. In Buchnera aphidicola subsp. Acyrthosiphon pisum (strain 5A), this protein is Small ribosomal subunit protein uS17.